A 320-amino-acid polypeptide reads, in one-letter code: Rhomboid-like protein 17, chloroplastic (320 aa).

The N-terminal 87 residues, 1–87 (MHAIFSSFSR…LKFGNVMESR (87 aa)), are a transit peptide targeting the chloroplast. 5 consecutive transmembrane segments (helical) span residues 116–136 (WING…AVFT), 160–180 (LITS…MIGI), 199–219 (LYFA…ALLA), 247–267 (MFAI…YFAL), and 295–315 (IASS…WARI).

The protein belongs to the peptidase S54 family.

It is found in the plastid. It localises to the chloroplast membrane. Its function is as follows. Probable rhomboid-type serine protease that catalyzes intramembrane proteolysis. The protein is Rhomboid-like protein 17, chloroplastic of Arabidopsis thaliana (Mouse-ear cress).